The sequence spans 842 residues: Elongation factor G, mitochondrial (842 aa).

The N-terminal 58 residues, 1–58 (MVAIPRVAAARSLARQLARQSLRTTSFASAPVRIAIASTPLARSPSSFRSLSSSTRRS), are a transit peptide targeting the mitochondrion. The tr-type G domain maps to 93–398 (VRQRNVGISA…GVCSYLPNPA (306 aa)). Residues 102-109 (AHIDSGKT), 196-200 (DTPGH), and 250-253 (NKMD) contribute to the GTP site. The disordered stretch occupies residues 423-442 (AGEDQEAAAEARKNAAPPVL).

It belongs to the TRAFAC class translation factor GTPase superfamily. Classic translation factor GTPase family. EF-G/EF-2 subfamily.

Its subcellular location is the mitochondrion. Its pathway is protein biosynthesis; polypeptide chain elongation. Functionally, mitochondrial GTPase that catalyzes the GTP-dependent ribosomal translocation step during translation elongation. During this step, the ribosome changes from the pre-translocational (PRE) to the post-translocational (POST) state as the newly formed A-site-bound peptidyl-tRNA and P-site-bound deacylated tRNA move to the P and E sites, respectively. Catalyzes the coordinated movement of the two tRNA molecules, the mRNA and conformational changes in the ribosome. The chain is Elongation factor G, mitochondrial from Mycosarcoma maydis (Corn smut fungus).